The chain runs to 191 residues: Decorin-binding protein A (191 aa).

Positions 1–29 are cleaved as a signal peptide; it reads MIKCNNKTFNNLLKLTILVNLLISCGLTG.

This sequence belongs to the decorin-binding protein family.

Its function is as follows. Binds to decorin which may mediate the adherence of B.burgdorferi to collagen fibers in skin and other tissues. The protein is Decorin-binding protein A (dbpA) of Borreliella burgdorferi (strain ATCC 35210 / DSM 4680 / CIP 102532 / B31) (Borrelia burgdorferi).